We begin with the raw amino-acid sequence, 474 residues long: Probable threonine--tRNA ligase, mitochondrial (474 aa).

A mitochondrion-targeting transit peptide spans 1–27 (MMKLKKFQLHTPFAHSCNRVEIYTARF).

This sequence belongs to the class-II aminoacyl-tRNA synthetase family.

The protein resides in the mitochondrion matrix. It carries out the reaction tRNA(Thr) + L-threonine + ATP = L-threonyl-tRNA(Thr) + AMP + diphosphate + H(+). The protein is Probable threonine--tRNA ligase, mitochondrial of Schizosaccharomyces pombe (strain 972 / ATCC 24843) (Fission yeast).